A 551-amino-acid polypeptide reads, in one-letter code: RCC1 and BTB domain-containing protein 2 (551 aa).

6 RCC1 repeats span residues 64 to 115, 117 to 169, 171 to 222, 223 to 274, 276 to 326, and 328 to 382; these read NDEI…VLAT, EGEV…VLTS, GEVF…AVVD, TGEV…VLTD, GQVY…AAKT, and GGHV…TVAE. The region spanning 394–457 is the BTB domain; sequence ADLKFLVDGK…LYTDSISLSP (64 aa).

The protein localises to the cytoplasmic vesicle. The protein resides in the secretory vesicle. It localises to the acrosome. This chain is RCC1 and BTB domain-containing protein 2 (RCBTB2), found in Homo sapiens (Human).